We begin with the raw amino-acid sequence, 287 residues long: MEEKEDKHQQHKIEDAAITYVSENEEIKHEEKPGKSIHHSKSHVGRGRIYYAKFINTNARTYNEPFPYIDPKKGPEIQGDWWSHGKALEPVFLPPYDSKSTQRSDFQKPSCPLVLPVKHSKMQKPSCGIVPLASPGTSAELQNNFIEYISFIHQYDARKTPNEPLQGKRHGAFVQREIKPGSRPTVPKGAEVLLNTPGSRSSEQSKKTEKGNSAESRMISPGLCQQNSQELLEPKTHLSETDVRQAAKACPSTPESREKTSGATQTTVGDALFTRHKPLNPPIKKSE.

2 stretches are compositionally biased toward basic and acidic residues: residues 1–15 (MEEK…KIED) and 25–34 (EEIKHEEKPG). Positions 1 to 42 (MEEKEDKHQQHKIEDAAITYVSENEEIKHEEKPGKSIHHSKS) are disordered. The mn 1 stretch occupies residues 128–160 (GIVPLASPGTSAELQNNFIEYISFIHQYDARKT). Residues 179–287 (KPGSRPTVPK…PLNPPIKKSE (109 aa)) form a disordered region. 2 stretches are compositionally biased toward basic and acidic residues: residues 203–212 (EQSKKTEKGN) and 232–245 (LEPK…DVRQ). The interval 213 to 246 (SAESRMISPGLCQQNSQELLEPKTHLSETDVRQA) is mn 2.

It localises to the cell projection. The protein resides in the cilium. In Homo sapiens (Human), this protein is Ciliary microtubule inner protein 6.